The primary structure comprises 480 residues: DnaJ homolog subfamily A member 3, mitochondrial (480 aa).

Arg58 bears the Omega-N-methylarginine; by CARM1 mark. The 66-residue stretch at 93–158 (DYYQILGVPR…VKRKQYDAYG (66 aa)) folds into the J domain. Residue Lys134 is modified to N6-acetyllysine. The CR-type zinc finger occupies 223 to 301 (GVNKEFTVNI…CRGAGQAKQK (79 aa)). Cys236 lines the Zn(2+) pocket. CXXCXGXG motif repeat units follow at residues 236-243 (CERCNGKG), 253-260 (CHYCGGSG), 275-282 (CRRCGGRG), and 289-296 (CVVCRGAG). An Omega-N-methylarginine; by CARM1 modification is found at Arg238. Residues Cys239, Cys253, Cys256, Cys275, Cys278, Cys289, and Cys292 each contribute to the Zn(2+) site. Arg293 bears the Omega-N-methylarginine; by CARM1 mark. Phosphoserine is present on Ser398. Positions 443–456 (LTSSGGSTMDSSAG) are enriched in polar residues. The disordered stretch occupies residues 443–471 (LTSSGGSTMDSSAGSKARREAGEDEEGFL).

Interacts with JAK2, HSPA9B and IFN-gammaR2 chain. Interacts with Ras GTPase-activating protein 1 (RASA1). Isoform 2 interacts with MUSK (via the cytoplasmic domain). Tyrosine phosphorylated. In terms of tissue distribution, widely expressed with highest levels in heart, liver, lung and skeletal muscles. Also expressed in keratinocytes; expression level and distribution is altered in basal cell carcinomas.

It is found in the mitochondrion matrix. The protein resides in the cytoplasm. It localises to the cytosol. The protein localises to the postsynaptic cell membrane. In terms of biological role, modulates apoptotic signal transduction or effector structures within the mitochondrial matrix. Affect cytochrome C release from the mitochondria and caspase 3 activation, but not caspase 8 activation. Isoform 1 increases apoptosis triggered by both TNF and the DNA-damaging agent mytomycin C; in sharp contrast, isoform 2 suppresses apoptosis. Can modulate IFN-gamma-mediated transcriptional activity. Isoform 2 may play a role in neuromuscular junction development as an effector of the MUSK signaling pathway. The sequence is that of DnaJ homolog subfamily A member 3, mitochondrial (DNAJA3) from Homo sapiens (Human).